A 267-amino-acid chain; its full sequence is Small ribosomal subunit protein uS2 (267 aa).

The tract at residues 222 to 267 (GKALRDQDSEEEIQNKEQDEVSQEEKDDILDEAMNEEDFEIPEDKE) is disordered. The segment covering 223 to 240 (KALRDQDSEEEIQNKEQD) has biased composition (basic and acidic residues). Residues 241-267 (EVSQEEKDDILDEAMNEEDFEIPEDKE) show a composition bias toward acidic residues.

This sequence belongs to the universal ribosomal protein uS2 family.

The protein is Small ribosomal subunit protein uS2 of Campylobacter hominis (strain ATCC BAA-381 / DSM 21671 / CCUG 45161 / LMG 19568 / NCTC 13146 / CH001A).